A 427-amino-acid chain; its full sequence is tRNA(Ile)-lysidine synthase (427 aa).

29-34 (SGGVDS) is an ATP binding site.

The protein belongs to the tRNA(Ile)-lysidine synthase family.

Its subcellular location is the cytoplasm. The catalysed reaction is cytidine(34) in tRNA(Ile2) + L-lysine + ATP = lysidine(34) in tRNA(Ile2) + AMP + diphosphate + H(+). In terms of biological role, ligates lysine onto the cytidine present at position 34 of the AUA codon-specific tRNA(Ile) that contains the anticodon CAU, in an ATP-dependent manner. Cytidine is converted to lysidine, thus changing the amino acid specificity of the tRNA from methionine to isoleucine. This chain is tRNA(Ile)-lysidine synthase, found in Thermosipho africanus (strain TCF52B).